Here is a 780-residue protein sequence, read N- to C-terminus: ATP-dependent 6-phosphofructokinase, muscle type (780 aa).

T2 is subject to N-acetylthreonine. Positions 2–390 (THEEHHAAKT…NWEVYKLLAH (389 aa)) are N-terminal catalytic PFK domain 1. ATP contacts are provided by residues G25, 88–89 (RC), and 118–121 (GDGS). D119 contacts Mg(2+). At S133 the chain carries Phosphoserine. Substrate contacts are provided by residues 164 to 166 (SID), R201, 208 to 210 (MGR), E264, R292, and 298 to 301 (HVQR). D166 (proton acceptor) is an active-site residue. Position 377 is a phosphoserine (S377). Positions 391-401 (VRPPVSKSGSH) are interdomain linker. Residues 402–780 (TVAVMNVGAP…TRKRSGEGAV (379 aa)) form a C-terminal regulatory PFK domain 2 region. Beta-D-fructose 2,6-bisphosphate contacts are provided by residues R471 and 528–532 (TVSNN). Residue S530 is glycosylated (O-linked (GlcNAc) serine). Residue K557 is modified to N6-(2-hydroxyisobutyryl)lysine. Beta-D-fructose 2,6-bisphosphate-binding positions include R566, 573 to 575 (MGG), E629, R655, and 661 to 664 (HMQQ). The residue at position 667 (S667) is a Phosphoserine. Residue R735 participates in beta-D-fructose 2,6-bisphosphate binding. Residue S775 is modified to Phosphoserine.

This sequence belongs to the phosphofructokinase type A (PFKA) family. ATP-dependent PFK group I subfamily. Eukaryotic two domain clade 'E' sub-subfamily. As to quaternary structure, homo- and heterotetramers. Phosphofructokinase (PFK) enzyme functions as a tetramer composed of different combinations of 3 types of subunits, called PFKM (M), PFKL (L) and PFKP (P). The composition of the PFK tetramer differs according to the tissue type it is present in. The kinetic and regulatory properties of the tetrameric enzyme are dependent on the subunit composition, hence can vary across tissues. Interacts (via C-terminus) with HK1 (via N-terminal spermatogenic cell-specific region). The cofactor is Mg(2+). Post-translationally, glcNAcylation decreases enzyme activity.

The protein localises to the cytoplasm. The enzyme catalyses beta-D-fructose 6-phosphate + ATP = beta-D-fructose 1,6-bisphosphate + ADP + H(+). Its pathway is carbohydrate degradation; glycolysis; D-glyceraldehyde 3-phosphate and glycerone phosphate from D-glucose: step 3/4. With respect to regulation, allosterically activated by ADP, AMP, or fructose 2,6-bisphosphate, and allosterically inhibited by ATP or citrate. In terms of biological role, catalyzes the phosphorylation of D-fructose 6-phosphate to fructose 1,6-bisphosphate by ATP, the first committing step of glycolysis. This is ATP-dependent 6-phosphofructokinase, muscle type (PFKM) from Macaca fascicularis (Crab-eating macaque).